A 397-amino-acid polypeptide reads, in one-letter code: MCNQTPLRSMALDSSGKQPEQQQQQQPRASSGNGEARLKLRRTPNEEHEPENYEDLPLDYSPSLFTSLERYLPEQLLNSTRIDKASFMRDLLLRYSPDTERVRVLRHKEYRDKIMSSYQRLHGEIYTLDPSSFFAPSFLGAFSRKSEPNFRSSMVESYPGIFTFEMFKPQFCEMLLAEVEHMEKWVYDSRSTIMRPNTMNNFGVVLDDFGFDSMLQKLVDDFISPIAQVLFPEVCGTSLDSHHGYIVEYGKDRDVDLGFHVDDSEVSLNVCLGKQFSGGELYFRGVRCDKHVNSDSTEKEVYDYSHVPGHAILHRGRHRHGARATTSGHRANLILWCRSSTFREMKNYQRDFSGWCGGCKLDKQRRQRDSINATKEILARKAAEKTLVELASKSCAE.

The disordered stretch occupies residues 1–56 (MCNQTPLRSMALDSSGKQPEQQQQQQPRASSGNGEARLKLRRTPNEEHEPENYEDL). The span at 18-27 (QPEQQQQQQP) shows a compositional bias: low complexity. The Fe2OG dioxygenase domain maps to 238-339 (SLDSHHGYIV…RANLILWCRS (102 aa)). Fe cation contacts are provided by histidine 260, aspartate 262, and histidine 320. 2-oxoglutarate is bound at residue arginine 330.

Fe(2+) is required as a cofactor. Requires L-ascorbate as cofactor. Expressed in roots, cotyledons, rosette leaves, cauline leaves and inflorescences.

Its subcellular location is the nucleus. It localises to the nucleoplasm. Its function is as follows. Participates in the epigenetic repression of flowering genes in association with CP2. Functions in the repression of several members of the MADS-box transcription factors family, including SEP3, during vegetative development via histone modification. In Arabidopsis thaliana (Mouse-ear cress), this protein is 2-oxoglutarate and iron-dependent oxygenase domain-containing protein ICU11.